The following is a 111-amino-acid chain: UPF0145 protein BRADO6695 (111 aa).

This sequence belongs to the UPF0145 family.

In Bradyrhizobium sp. (strain ORS 278), this protein is UPF0145 protein BRADO6695.